The sequence spans 196 residues: uncharacterized protein (196 aa).

A disordered region spans residues 44-80 (RSVAVPGTEGKKAQNLRQLPAARLTYPTSSSTRPSHA).

This is an uncharacterized protein from Treponema pallidum (strain Nichols).